Reading from the N-terminus, the 545-residue chain is Chaperonin GroEL 2 (545 aa).

ATP is bound by residues 30-33, lysine 51, 87-91, glycine 415, and aspartate 494; these read TLGP and DGTTT. The disordered stretch occupies residues 526 to 545; the sequence is EKGAGMPGMPPGGGYPGMGM. Gly residues predominate over residues 536–545; sequence PGGGYPGMGM.

This sequence belongs to the chaperonin (HSP60) family. In terms of assembly, forms a cylinder of 14 subunits composed of two heptameric rings stacked back-to-back. Interacts with the co-chaperonin GroES.

Its subcellular location is the cytoplasm. The catalysed reaction is ATP + H2O + a folded polypeptide = ADP + phosphate + an unfolded polypeptide.. Together with its co-chaperonin GroES, plays an essential role in assisting protein folding. The GroEL-GroES system forms a nano-cage that allows encapsulation of the non-native substrate proteins and provides a physical environment optimized to promote and accelerate protein folding. The sequence is that of Chaperonin GroEL 2 from Syntrophus aciditrophicus (strain SB).